The primary structure comprises 537 residues: CTP synthase (537 aa).

The interval 1 to 265 (MVHFIFVTGG…DNKVLKFFNI (265 aa)) is amidoligase domain. Ser-13 is a binding site for CTP. Residue Ser-13 participates in UTP binding. ATP contacts are provided by residues 14 to 19 (SLGKGL) and Asp-71. 2 residues coordinate Mg(2+): Asp-71 and Glu-139. Residues 146–148 (DIE) and Lys-222 contribute to the CTP site. Lys-222 is a UTP binding site. The 247-residue stretch at 290-536 (RIAIIAKYHK…IKAAIEYNKC (247 aa)) folds into the Glutamine amidotransferase type-1 domain. Residue Gly-352 coordinates L-glutamine. Cys-379 acts as the Nucleophile; for glutamine hydrolysis in catalysis. L-glutamine-binding positions include 380–383 (FGMQ), Glu-403, and Arg-464. Catalysis depends on residues His-509 and Glu-511.

The protein belongs to the CTP synthase family. In terms of assembly, homotetramer.

It carries out the reaction UTP + L-glutamine + ATP + H2O = CTP + L-glutamate + ADP + phosphate + 2 H(+). The enzyme catalyses L-glutamine + H2O = L-glutamate + NH4(+). It catalyses the reaction UTP + NH4(+) + ATP = CTP + ADP + phosphate + 2 H(+). Its pathway is pyrimidine metabolism; CTP biosynthesis via de novo pathway; CTP from UDP: step 2/2. Allosterically activated by GTP, when glutamine is the substrate; GTP has no effect on the reaction when ammonia is the substrate. The allosteric effector GTP functions by stabilizing the protein conformation that binds the tetrahedral intermediate(s) formed during glutamine hydrolysis. Inhibited by the product CTP, via allosteric rather than competitive inhibition. Its function is as follows. Catalyzes the ATP-dependent amination of UTP to CTP with either L-glutamine or ammonia as the source of nitrogen. Regulates intracellular CTP levels through interactions with the four ribonucleotide triphosphates. The sequence is that of CTP synthase from Rickettsia rickettsii (strain Iowa).